The primary structure comprises 217 residues: Ribonuclease HII (217 aa).

Residues 34-217 enclose the RNase H type-2 domain; sequence WPVAGTDEAG…RMSFRPLKRD (184 aa). A divalent metal cation is bound by residues Asp40, Glu41, and Asp131.

It belongs to the RNase HII family. The cofactor is Mn(2+). Mg(2+) serves as cofactor.

The protein localises to the cytoplasm. It catalyses the reaction Endonucleolytic cleavage to 5'-phosphomonoester.. Functionally, endonuclease that specifically degrades the RNA of RNA-DNA hybrids. This Agrobacterium fabrum (strain C58 / ATCC 33970) (Agrobacterium tumefaciens (strain C58)) protein is Ribonuclease HII.